Consider the following 287-residue polypeptide: ATP synthase gamma chain (287 aa).

Belongs to the ATPase gamma chain family. F-type ATPases have 2 components, CF(1) - the catalytic core - and CF(0) - the membrane proton channel. CF(1) has five subunits: alpha(3), beta(3), gamma(1), delta(1), epsilon(1). CF(0) has three main subunits: a, b and c.

Its subcellular location is the cell inner membrane. In terms of biological role, produces ATP from ADP in the presence of a proton gradient across the membrane. The gamma chain is believed to be important in regulating ATPase activity and the flow of protons through the CF(0) complex. The chain is ATP synthase gamma chain from Colwellia maris.